Consider the following 650-residue polypeptide: 1-deoxy-D-xylulose-5-phosphate synthase 2 (650 aa).

Residues H79 and 120-122 (AHS) each bind thiamine diphosphate. A Mg(2+)-binding site is contributed by D151. Thiamine diphosphate-binding positions include 152 to 153 (GS), N180, Y289, and E371. N180 contacts Mg(2+).

Belongs to the transketolase family. DXPS subfamily. As to quaternary structure, homodimer. It depends on Mg(2+) as a cofactor. Thiamine diphosphate is required as a cofactor.

The enzyme catalyses D-glyceraldehyde 3-phosphate + pyruvate + H(+) = 1-deoxy-D-xylulose 5-phosphate + CO2. Its pathway is metabolic intermediate biosynthesis; 1-deoxy-D-xylulose 5-phosphate biosynthesis; 1-deoxy-D-xylulose 5-phosphate from D-glyceraldehyde 3-phosphate and pyruvate: step 1/1. Catalyzes the acyloin condensation reaction between C atoms 2 and 3 of pyruvate and glyceraldehyde 3-phosphate to yield 1-deoxy-D-xylulose-5-phosphate (DXP). The sequence is that of 1-deoxy-D-xylulose-5-phosphate synthase 2 from Zymomonas mobilis subsp. mobilis (strain ATCC 31821 / ZM4 / CP4).